We begin with the raw amino-acid sequence, 275 residues long: Phosphite import ATP-binding protein PxtA (275 aa).

An ABC transporter domain is found at 11 to 252 (LRVDRLSVVY…QLERIYAGRS (242 aa)). Residue 44 to 51 (GLSGAGKS) coordinates ATP. The segment at 251-275 (RSTTQPANAPAEPPVMLEPSLEMSR) is disordered.

The protein belongs to the ABC transporter superfamily. Phosphonates importer (TC 3.A.1.9.1) family. In terms of assembly, the complex is composed of two ATP-binding proteins (PtxA), two transmembrane proteins (PtxC) and a solute-binding protein (PtxB).

It is found in the cell inner membrane. The enzyme catalyses phosphite(out) + ATP + H2O = phosphite(in) + ADP + phosphate + H(+). Functionally, part of the ABC transporter complex PtxABC involved in phosphite import. Responsible for energy coupling to the transport system. The chain is Phosphite import ATP-binding protein PxtA (ptxA) from Stutzerimonas stutzeri (Pseudomonas stutzeri).